Consider the following 228-residue polypeptide: AA9 family lytic polysaccharide monooxygenase A (228 aa).

Residues His-1 and His-86 each coordinate Cu(2+). His-1 is subject to Methylhistidine. 2 cysteine pairs are disulfide-bonded: Cys-56-Cys-178 and Cys-97-Cys-101. Asn-138 is a glycosylation site (N-linked (GlcNAc...) asparagine). Positions 164 and 173 each coordinate O2. A Cu(2+)-binding site is contributed by Tyr-175.

Belongs to the polysaccharide monooxygenase AA9 family. Cu(2+) is required as a cofactor. Post-translationally, the catalytically essential N-terminal histidine His-22 is post-translationally modified by methylation to prevent protonation of the histidine side chain, and protect the critical active site of the enzyme from oxidative damage.

The protein localises to the secreted. The enzyme catalyses [(1-&gt;4)-beta-D-glucosyl]n+m + reduced acceptor + O2 = 4-dehydro-beta-D-glucosyl-[(1-&gt;4)-beta-D-glucosyl]n-1 + [(1-&gt;4)-beta-D-glucosyl]m + acceptor + H2O.. Small amounts of H(2)O(2) boost LPMO activity, while higher amounts lead to inactivation of the enzyme. Functionally, lytic polysaccharide monooxygenase (LPMO) that depolymerizes crystalline and amorphous polysaccharides via the oxidation of scissile alpha- or beta-(1-4)-glycosidic bonds, yielding C1 and C4 oxidation product. Catalysis by LPMOs requires the reduction of the active-site copper from Cu(II) to Cu(I) by a reducing agent and H(2)O(2) or O(2) as a cosubstrate. Is able to cleave cellulose and xylan to produce C1- and C4-oxidized products. This Thermoascus aurantiacus protein is AA9 family lytic polysaccharide monooxygenase A.